Here is a 1639-residue protein sequence, read N- to C-terminus: RIMS-binding protein 3B (1639 aa).

Disordered regions lie at residues 1–22 (MAKD…SSPA), 215–240 (GSPD…CHAP), and 295–364 (SLDS…LTPS). Positions 21–143 (PAAAVLENQR…ELQRQLAEEL (123 aa)) form a coiled coil. The span at 326–339 (SPPPSPLPPPPPPS) shows a compositional bias: pro residues. Coiled coils occupy residues 409–442 (QADE…QETN) and 480–619 (LAKD…AEEN). The disordered stretch occupies residues 697–811 (CRPGHPPEQP…DRDTASEVDD (115 aa)). Polar residues-rich tracts occupy residues 707–718 (WETSQMPESQVK) and 761–775 (SVPQ…SQPL). The span at 776–790 (SKKTSSQSNSSSEGS) shows a compositional bias: low complexity. The 68-residue stretch at 832-899 (PKLKIFMAQY…PSNFVEQIPD (68 aa)) folds into the SH3 1 domain. Fibronectin type-III domains follow at residues 995-1083 (APMQ…TLLA) and 1088-1184 (PPLE…IPED). 3 disordered regions span residues 1251-1273 (PRRQ…GAGS), 1292-1325 (QKSP…SPAP), and 1392-1413 (GTER…QALG). Residues 1293 to 1305 (KSPQNHRPPSVSD) show a composition bias toward polar residues. A compositionally biased stretch (basic and acidic residues) spans 1392 to 1406 (GTERREERREPEPHS). 2 consecutive SH3 domains span residues 1452–1520 (TPAR…EMEV) and 1569–1636 (WTPK…HMSL).

This sequence belongs to the RIMBP family. In terms of assembly, interacts with LRGUK (via guanylate kinase-like domain). Interacts (via C-terminus) with HOOK1 (via coiled-coil region).

The protein localises to the cytoplasm. Its subcellular location is the cytoskeleton. Probable component of the manchette, a microtubule-based structure which plays a key role in sperm head morphogenesis during late stages of sperm development. This Homo sapiens (Human) protein is RIMS-binding protein 3B (RIMBP3B).